The following is a 178-amino-acid chain: Cysteine protease inhibitor 7 (178 aa).

Intrachain disulfides connect Cys-41/Cys-93 and Cys-141/Cys-147.

This sequence belongs to the protease inhibitor I3 (leguminous Kunitz-type inhibitor) family.

The protein resides in the vacuole. Its function is as follows. Inhibitor of cysteine proteases. May protect the plant by inhibiting proteases of invading organisms. The chain is Cysteine protease inhibitor 7 from Solanum tuberosum (Potato).